Consider the following 565-residue polypeptide: Adenine deaminase 1 (565 aa).

Belongs to the metallo-dependent hydrolases superfamily. Adenine deaminase family. Requires Mn(2+) as cofactor.

The catalysed reaction is adenine + H2O + H(+) = hypoxanthine + NH4(+). This chain is Adenine deaminase 1, found in Rhizobium etli (strain ATCC 51251 / DSM 11541 / JCM 21823 / NBRC 15573 / CFN 42).